The chain runs to 121 residues: Large ribosomal subunit protein bL12 (121 aa).

This sequence belongs to the bacterial ribosomal protein bL12 family. As to quaternary structure, homodimer. Part of the ribosomal stalk of the 50S ribosomal subunit. Forms a multimeric L10(L12)X complex, where L10 forms an elongated spine to which 2 to 4 L12 dimers bind in a sequential fashion. Binds GTP-bound translation factors.

In terms of biological role, forms part of the ribosomal stalk which helps the ribosome interact with GTP-bound translation factors. Is thus essential for accurate translation. This is Large ribosomal subunit protein bL12 from Streptococcus agalactiae serotype Ia (strain ATCC 27591 / A909 / CDC SS700).